Reading from the N-terminus, the 295-residue chain is 4-hydroxy-tetrahydrodipicolinate synthase (295 aa).

Position 47 (threonine 47) interacts with pyruvate. Tyrosine 135 acts as the Proton donor/acceptor in catalysis. Catalysis depends on lysine 163, which acts as the Schiff-base intermediate with substrate. Isoleucine 206 contributes to the pyruvate binding site.

It belongs to the DapA family. Homodimer.

Its subcellular location is the cytoplasm. It carries out the reaction L-aspartate 4-semialdehyde + pyruvate = (2S,4S)-4-hydroxy-2,3,4,5-tetrahydrodipicolinate + H2O + H(+). The protein operates within amino-acid biosynthesis; L-lysine biosynthesis via DAP pathway; (S)-tetrahydrodipicolinate from L-aspartate: step 3/4. Its function is as follows. Catalyzes the condensation of (S)-aspartate-beta-semialdehyde [(S)-ASA] and pyruvate to 4-hydroxy-tetrahydrodipicolinate (HTPA). This chain is 4-hydroxy-tetrahydrodipicolinate synthase, found in Staphylococcus aureus (strain Mu50 / ATCC 700699).